The primary structure comprises 842 residues: ATP-binding cassette sub-family B member 6 (842 aa).

At 1–26 the chain is on the lumenal side; that stretch reads MVTVGNYCETEGPAGPAWTQNGLSPC. Residues 1 to 205 form a required for the lysosomal targeting region; that stretch reads MVTVGNYCET…SGGLFILGLW (205 aa). Residues 1–236 form a required for ATPase activity region; sequence MVTVGNYCET…GNQGRSTDRR (236 aa). Residues Cys-8 and Cys-26 are joined by a disulfide bond. A helical membrane pass occupies residues 27–47; it reads FFFTLVPSTLLTLGVLALVLV. Residues 48 to 72 lie on the Cytoplasmic side of the membrane; it reads LPRRRREVPAGPEELSWAAGPRVAP. Residues 73–93 traverse the membrane as a helical segment; the sequence is YVLQLFLATLQMALPLAGLAG. The Lumenal portion of the chain corresponds to 94–106; the sequence is RVGTARGVRLPGY. A helical membrane pass occupies residues 107-127; the sequence is LLLASVLESLASVCGLWLLVV. Over 128–147 the chain is Cytoplasmic; sequence ERSQARQSLAMGVWMKFRHS. Residues 148–168 traverse the membrane as a helical segment; sequence LGLLLLWTVTFAAENLALVSW. The Lumenal segment spans residues 169-185; that stretch reads NSPQWWWARADLGQQVQ. The helical transmembrane segment at 186–206 threads the bilayer; it reads FGLWVLRYVTSGGLFILGLWA. Over 207–263 the chain is Cytoplasmic; sequence PGLRPQSYTLHVHEEDQDVGGNQGRSTDRRSTWRDLGRKLRLLSSYLWPRGSPSLQL. Residues 264–284 traverse the membrane as a helical segment; sequence IVLICLGLMGLERALNVLVPI. The ABC transmembrane type-1 domain occupies 265–556; that stretch reads VLICLGLMGL…FGTYYRMIQT (292 aa). Residues 285–291 lie on the Lumenal side of the membrane; the sequence is FYRDIVN. Residues 292–312 traverse the membrane as a helical segment; sequence LLTAKAPWSSLAWTVTTYVFL. Topologically, residues 313–375 are cytoplasmic; that stretch reads KFLQGGGTGS…TGEVLRIVDR (63 aa). The helical transmembrane segment at 376–396 threads the bilayer; that stretch reads GTSSVTGLLSYLVFSIIPTLA. Residue Asp-397 is a topological domain, lumenal. The helical transmembrane segment at 398 to 418 threads the bilayer; it reads IIIGIIYFSMFFNAWFGLIVF. The Cytoplasmic portion of the chain corresponds to 419-499; sequence LCMSLYLILT…STASLVVLNQ (81 aa). The helical transmembrane segment at 500 to 520 threads the bilayer; sequence TQNLVIGLGLLAGSLLCAYFV. At 521-529 the chain is on the lumenal side; the sequence is SEQKLQVGD. Residues 530–550 traverse the membrane as a helical segment; that stretch reads FVLFGTYITQLYMPLNWFGTY. Residues 551-842 are Cytoplasmic-facing; it reads YRMIQTNFID…PEESKPQDTA (292 aa). An ABC transporter domain is found at 590-824; the sequence is IEFENVHFSY…GGVYAEMWQL (235 aa). Residues Tyr-599 and 623–634 each bind ATP; that span reads GPSGAGKSTILR.

This sequence belongs to the ABC transporter superfamily. ABCB family. Heavy Metal importer (TC 3.A.1.210) subfamily. In terms of assembly, homodimer. In terms of processing, N-glycosylated.

The protein resides in the cell membrane. The protein localises to the mitochondrion outer membrane. It is found in the endoplasmic reticulum membrane. It localises to the golgi apparatus membrane. Its subcellular location is the endosome membrane. The protein resides in the lysosome membrane. The protein localises to the late endosome membrane. It is found in the early endosome membrane. It localises to the secreted. Its subcellular location is the extracellular exosome. The protein resides in the mitochondrion. The protein localises to the endosome. It is found in the multivesicular body membrane. It localises to the melanosome membrane. The catalysed reaction is coproporphyrin III(in) + ATP + H2O = coproporphyrin III(out) + ADP + phosphate + H(+). It catalyses the reaction coproporphyrinogen III(in) + ATP + H2O = coproporphyrinogen III(out) + ADP + phosphate + H(+). The enzyme catalyses heme b(in) + ATP + H2O = heme b(out) + ADP + phosphate + H(+). It carries out the reaction pheophorbide a(in) + ATP + H2O = pheophorbide a(out) + ADP + phosphate + H(+). The catalysed reaction is protoporphyrin IX(in) + ATP + H2O = protoporphyrin IX(out) + ADP + phosphate + H(+). It catalyses the reaction coproporphyrin I(in) + ATP + H2O = coproporphyrin I(out) + ADP + phosphate + H(+). The enzyme catalyses uroporphyrin I(in) + ATP + H2O = uroporphyrin I(out) + ADP + phosphate + H(+). It carries out the reaction uroporphyrin III(in) + ATP + H2O = uroporphyrin III(out) + ADP + phosphate + H(+). Functionally, ATP-dependent transporter that catalyzes the transport of a broad-spectrum of porphyrins from the cytoplasm to the extracellular space through the plasma membrane or into the vesicle lumen. May also function as an ATP-dependent importer of porphyrins from the cytoplasm into the mitochondria, in turn may participate in the de novo heme biosynthesis regulation and in the coordination of heme and iron homeostasis during phenylhydrazine stress. May play a key role in the early steps of melanogenesis producing PMEL amyloid fibrils. In vitro, it confers to cells a resistance to toxic metal such as arsenic and cadmium and against chemotherapeutics agent such as 5-fluorouracil, SN-38 and vincristin. In addition may play a role in the transition metal homeostasis. This is ATP-binding cassette sub-family B member 6 from Mus musculus (Mouse).